We begin with the raw amino-acid sequence, 197 residues long: MKKALFLILDQYADWEGVYLASALNQREDWSVHTVSLDPIVSSIGGFKTSVDYIIGLEPANFNLLVMIGGDSWSNDNKKLLHFVKTAFQKNIPIAAICGAVDFLAKNGLLNNHSHTGNFVYLWKDYKQYKPISSFVEKQAVRDKNLVTANGTAPIEFTNLILEMIDFDTPENIEKMMYMNRYGFYHFCDKYGNPFVD.

In terms of domain architecture, PfpI endopeptidase spans 29-166 (DWSVHTVSLD…FTNLILEMID (138 aa)). The Nucleophile role is filled by Cys98.

This sequence belongs to the peptidase C56 family.

This is an uncharacterized protein from Bacillus subtilis (strain 168).